Reading from the N-terminus, the 222-residue chain is Pectate lyase A (222 aa).

Positions 1-25 are cleaved as a signal peptide; sequence MKKMLTLLLSAGLVASIFGVMPAAA.

Belongs to the polysaccharide lyase 3 family. Ca(2+) serves as cofactor.

It is found in the secreted. It catalyses the reaction Eliminative cleavage of (1-&gt;4)-alpha-D-galacturonan to give oligosaccharides with 4-deoxy-alpha-D-galact-4-enuronosyl groups at their non-reducing ends.. It carries out the reaction Eliminative cleavage of (1-&gt;4)-alpha-D-galacturonan methyl ester to give oligosaccharides with 4-deoxy-6-O-methyl-alpha-D-galact-4-enuronosyl groups at their non-reducing ends.. The protein operates within glycan metabolism; pectin degradation; 2-dehydro-3-deoxy-D-gluconate from pectin: step 2/5. With respect to regulation, strongly inhibited by Ba(2+). To a lesser extent, is also inhibited by Sn(2+), Mg(2+) and Ag(+). Inhibited by EDTA in vitro. In terms of biological role, catalyzes the depolymerization of both polygalacturonate and pectins of methyl esterification degree from 22 to 89%, with an endo mode of action. In contrast to the majority of pectate lyases, displays high activity on highly methylated pectins. Is not able to cleave trigalacturonate. Does not degrade xylans and carboxymethylcellulose (CMC). The chain is Pectate lyase A (pelA) from Paenibacillus barcinonensis.